Consider the following 119-residue polypeptide: Large ribosomal subunit protein uL22 (119 aa).

It belongs to the universal ribosomal protein uL22 family. Part of the 50S ribosomal subunit.

In terms of biological role, this protein binds specifically to 23S rRNA; its binding is stimulated by other ribosomal proteins, e.g. L4, L17, and L20. It is important during the early stages of 50S assembly. It makes multiple contacts with different domains of the 23S rRNA in the assembled 50S subunit and ribosome. Functionally, the globular domain of the protein is located near the polypeptide exit tunnel on the outside of the subunit, while an extended beta-hairpin is found that lines the wall of the exit tunnel in the center of the 70S ribosome. The chain is Large ribosomal subunit protein uL22 from Chlorobium chlorochromatii (strain CaD3).